Reading from the N-terminus, the 131-residue chain is Peptide methionine sulfoxide reductase MsrB (131 aa).

The 123-residue stretch at 8 to 130 (LEEWKEMLDP…NSVCLDLVPR (123 aa)) folds into the MsrB domain. Zn(2+) is bound by residues Cys-47, Cys-50, Cys-96, and Cys-99. Cys-119 (nucleophile) is an active-site residue.

It belongs to the MsrB Met sulfoxide reductase family. Zn(2+) is required as a cofactor.

It carries out the reaction L-methionyl-[protein] + [thioredoxin]-disulfide + H2O = L-methionyl-(R)-S-oxide-[protein] + [thioredoxin]-dithiol. This Pseudomonas savastanoi pv. phaseolicola (strain 1448A / Race 6) (Pseudomonas syringae pv. phaseolicola (strain 1448A / Race 6)) protein is Peptide methionine sulfoxide reductase MsrB.